A 79-amino-acid polypeptide reads, in one-letter code: ATP synthase subunit c (79 aa).

2 consecutive transmembrane segments (helical) span residues 11–31 and 53–73; these read MAAAVMMGLAAIGAAIGIGIL and FFIVMGLVDAIPMIAVGLGLY.

The protein belongs to the ATPase C chain family. As to quaternary structure, F-type ATPases have 2 components, F(1) - the catalytic core - and F(0) - the membrane proton channel. F(1) has five subunits: alpha(3), beta(3), gamma(1), delta(1), epsilon(1). F(0) has three main subunits: a(1), b(2) and c(10-14). The alpha and beta chains form an alternating ring which encloses part of the gamma chain. F(1) is attached to F(0) by a central stalk formed by the gamma and epsilon chains, while a peripheral stalk is formed by the delta and b chains.

It localises to the cell inner membrane. F(1)F(0) ATP synthase produces ATP from ADP in the presence of a proton or sodium gradient. F-type ATPases consist of two structural domains, F(1) containing the extramembraneous catalytic core and F(0) containing the membrane proton channel, linked together by a central stalk and a peripheral stalk. During catalysis, ATP synthesis in the catalytic domain of F(1) is coupled via a rotary mechanism of the central stalk subunits to proton translocation. In terms of biological role, key component of the F(0) channel; it plays a direct role in translocation across the membrane. A homomeric c-ring of between 10-14 subunits forms the central stalk rotor element with the F(1) delta and epsilon subunits. This chain is ATP synthase subunit c, found in Serratia proteamaculans (strain 568).